Reading from the N-terminus, the 159-residue chain is Na(+)/H(+) antiporter subunit E1 (159 aa).

Transmembrane regions (helical) follow at residues 1–21, 27–47, 49–69, and 101–121; these read MAVQLVLNFIIAVFWLFVTNS, FVLGFIFGLVLVYLLHRVLPG, FYVITLYRIIKLVIIFLIELI, and WQIVLLSNLITLTPGTVVLGV.

Belongs to the CPA3 antiporters (TC 2.A.63) subunit E family. May form a heterooligomeric complex that consists of seven subunits: mnhA1, mnhB1, mnhC1, mnhD1, mnhE1, mnhF1 and mnhG1.

Its subcellular location is the cell membrane. Mnh complex is a Na(+)/H(+) antiporter involved in Na(+) excretion. In Staphylococcus aureus (strain Mu3 / ATCC 700698), this protein is Na(+)/H(+) antiporter subunit E1 (mnhE1).